The primary structure comprises 497 residues: Iron-sulfur cluster assembly factor IBA57, mitochondrial (497 aa).

The N-terminal 27 residues, 1–27, are a transit peptide targeting the mitochondrion; the sequence is MFISRRCRIKGFTLKNLLWFRSSSTRF. Residues 414 to 433 are disordered; it reads PTLNPFTNKPPERTKRKQRP.

This sequence belongs to the GcvT family. CAF17/IBA57 subfamily. As to quaternary structure, interacts with CCR4, ISA1 and ISA2.

Its subcellular location is the mitochondrion matrix. Required for lysine and glutamate prototrophy and mitochondrial genome maintenance. Has a role in the maturation of mitochondrial aconitase-type and radical-SAM Fe/S proteins biotin synthase and lipoic acid synthase. This Saccharomyces cerevisiae (strain ATCC 204508 / S288c) (Baker's yeast) protein is Iron-sulfur cluster assembly factor IBA57, mitochondrial.